The chain runs to 171 residues: Endoribonuclease YbeY (171 aa).

Zn(2+)-binding residues include His126, His130, and His136.

Belongs to the endoribonuclease YbeY family. It depends on Zn(2+) as a cofactor.

The protein resides in the cytoplasm. In terms of biological role, single strand-specific metallo-endoribonuclease involved in late-stage 70S ribosome quality control and in maturation of the 3' terminus of the 16S rRNA. This chain is Endoribonuclease YbeY, found in Rhizobium etli (strain ATCC 51251 / DSM 11541 / JCM 21823 / NBRC 15573 / CFN 42).